A 248-amino-acid polypeptide reads, in one-letter code: 23S rRNA (guanosine(2553)-2'-O)-methyltransferase RlmP (248 aa).

S-adenosyl-L-methionine contacts are provided by arginine 123, glycine 204, valine 224, and leucine 233.

It belongs to the class IV-like SAM-binding methyltransferase superfamily. RNA methyltransferase TrmH family. As to quaternary structure, homodimer.

The protein resides in the cytoplasm. It catalyses the reaction guanosine(2553) in 23S rRNA + S-adenosyl-L-methionine = 2'-O-methylguanosine(2553) in 23S rRNA + S-adenosyl-L-homocysteine + H(+). Specifically methylates the ribose of guanosine 2553 (G2553) in 23S rRNA. When the target G2553 is mutated, is able to methylate the ribose of adenosine, but it cannot methylate cytidine nor uridine. Modifies free 23S rRNA but not the fully assembled ribosome nor the 50S subunit, suggesting that the modification occurs early during ribosome biogenesis. The polypeptide is 23S rRNA (guanosine(2553)-2'-O)-methyltransferase RlmP (Bacillus subtilis (strain 168)).